Reading from the N-terminus, the 395-residue chain is Type II restriction enzyme BsuFI (395 aa).

As to quaternary structure, homodimer. Mg(2+) serves as cofactor.

The catalysed reaction is Endonucleolytic cleavage of DNA to give specific double-stranded fragments with terminal 5'-phosphates.. In terms of biological role, a P subtype restriction enzyme that recognizes the double-stranded sequence 5'-CCGG-3' and cleaves after C-1. The polypeptide is Type II restriction enzyme BsuFI (hsdFR) (Bacillus subtilis).